Consider the following 203-residue polypeptide: Tic20 family protein Ycf60 (203 aa).

Transmembrane regions (helical) follow at residues 2-22 (IRLF…RLAL), 51-71 (TVPY…YVLP), 84-104 (IILP…VTFF), 131-151 (ILLF…PIEF), and 153-173 (ISFL…STIT).

This sequence belongs to the Tic20 family.

The protein localises to the plastid. Its subcellular location is the chloroplast membrane. The chain is Tic20 family protein Ycf60 (ycf60) from Pyropia yezoensis (Susabi-nori).